Consider the following 137-residue polypeptide: Nucleoside diphosphate kinase (137 aa).

6 residues coordinate ATP: Lys-9, Phe-57, Arg-85, Thr-91, Arg-102, and Asn-112. The Pros-phosphohistidine intermediate role is filled by His-115.

It belongs to the NDK family. Homotetramer. Requires Mg(2+) as cofactor.

It localises to the cytoplasm. The enzyme catalyses a 2'-deoxyribonucleoside 5'-diphosphate + ATP = a 2'-deoxyribonucleoside 5'-triphosphate + ADP. It catalyses the reaction a ribonucleoside 5'-diphosphate + ATP = a ribonucleoside 5'-triphosphate + ADP. Its function is as follows. Major role in the synthesis of nucleoside triphosphates other than ATP. The ATP gamma phosphate is transferred to the NDP beta phosphate via a ping-pong mechanism, using a phosphorylated active-site intermediate. In Geobacter sulfurreducens (strain ATCC 51573 / DSM 12127 / PCA), this protein is Nucleoside diphosphate kinase.